We begin with the raw amino-acid sequence, 419 residues long: uncharacterized protein (419 aa).

The 208-residue stretch at 29–236 (PKFQDKIRIR…KLIELELKTI (208 aa)) folds into the Obg domain. Residues 237 to 414 (CEIGLVGLPN…LVRGMTQLLQ (178 aa)) form the OBG-type G domain. Residues 243 to 250 (GLPNAGKS), 295 to 299 (DIPGI), and 364 to 367 (ANKA) contribute to the GTP site.

The protein belongs to the TRAFAC class OBG-HflX-like GTPase superfamily. OBG GTPase family.

It is found in the mitochondrion. This is an uncharacterized protein from Schizosaccharomyces pombe (strain 972 / ATCC 24843) (Fission yeast).